A 224-amino-acid chain; its full sequence is PHD finger-containing protein 5 (224 aa).

The PHD-type zinc finger occupies 31–81 (KKPCEVCGSDANELLMMTCFMCRDTREHTYCARVMFQRVPRLWICEECRDF). The Zn(2+) site is built by cysteine 34, cysteine 37, cysteine 49, cysteine 52, histidine 58, cysteine 61, cysteine 75, and cysteine 78. Positions 116–137 (PRTNQVVDNHQDPPIDQTDPSS) are disordered.

Interacts directly with AIPP3/BDT1.

Together with AIPP3/BDT1, cooperates to form a BAH-PHD bivalent histone reader complex able to read histone H3 lysine 27 trimethylation (H3K27me3) histone marks in order to regulate transcription, especially to prevent early flowering; promotes AIPP3/BDT1 binding to H3K27me3. The sequence is that of PHD finger-containing protein 5 from Arabidopsis thaliana (Mouse-ear cress).